Here is a 236-residue protein sequence, read N- to C-terminus: Exosome complex component Rrp4 (236 aa).

Residues 64–133 (GDKVIGKVIE…EIKESWLTLK (70 aa)) enclose the S1 motif domain. The 59-residue stretch at 141–199 (EGGHMVLIHASRVPRVIGKGGGMVNMVKELTATRIIIGQNGLIWIDGPIEGVTMAIAAI) folds into the KH domain.

This sequence belongs to the RRP4 family. Component of the archaeal exosome complex. Forms a trimer of Rrp4 and/or Csl4 subunits. The trimer associates with a hexameric ring-like arrangement composed of 3 Rrp41-Rrp42 heterodimers.

Its subcellular location is the cytoplasm. In terms of biological role, non-catalytic component of the exosome, which is a complex involved in RNA degradation. Increases the RNA binding and the efficiency of RNA degradation. Confers strong poly(A) specificity to the exosome. The protein is Exosome complex component Rrp4 of Thermoplasma acidophilum (strain ATCC 25905 / DSM 1728 / JCM 9062 / NBRC 15155 / AMRC-C165).